The chain runs to 338 residues: Ketol-acid reductoisomerase (NADP(+)) (338 aa).

One can recognise a KARI N-terminal Rossmann domain in the interval 1 to 181 (MQVYYDKDCD…GGGRTGIIET (181 aa)). NADP(+) is bound by residues 24–27 (YGSQ), arginine 47, serine 50, serine 52, and 82–85 (DEFQ). The active site involves histidine 107. Residue glycine 133 coordinates NADP(+). One can recognise a KARI C-terminal knotted domain in the interval 182–327 (TFKDETETDL…EKLRAMMPWI (146 aa)). Residues aspartate 190, glutamate 194, glutamate 226, and glutamate 230 each coordinate Mg(2+). Position 251 (serine 251) interacts with substrate.

It belongs to the ketol-acid reductoisomerase family. Requires Mg(2+) as cofactor.

It carries out the reaction (2R)-2,3-dihydroxy-3-methylbutanoate + NADP(+) = (2S)-2-acetolactate + NADPH + H(+). The catalysed reaction is (2R,3R)-2,3-dihydroxy-3-methylpentanoate + NADP(+) = (S)-2-ethyl-2-hydroxy-3-oxobutanoate + NADPH + H(+). The protein operates within amino-acid biosynthesis; L-isoleucine biosynthesis; L-isoleucine from 2-oxobutanoate: step 2/4. It participates in amino-acid biosynthesis; L-valine biosynthesis; L-valine from pyruvate: step 2/4. Functionally, involved in the biosynthesis of branched-chain amino acids (BCAA). Catalyzes an alkyl-migration followed by a ketol-acid reduction of (S)-2-acetolactate (S2AL) to yield (R)-2,3-dihydroxy-isovalerate. In the isomerase reaction, S2AL is rearranged via a Mg-dependent methyl migration to produce 3-hydroxy-3-methyl-2-ketobutyrate (HMKB). In the reductase reaction, this 2-ketoacid undergoes a metal-dependent reduction by NADPH to yield (R)-2,3-dihydroxy-isovalerate. The protein is Ketol-acid reductoisomerase (NADP(+)) of Teredinibacter turnerae (strain ATCC 39867 / T7901).